A 576-amino-acid polypeptide reads, in one-letter code: MNIFNKLKQDIIAASRQLYNNQEIANNATIETPKDNFNGDLSSNIAMIIAAKENISPREVALKFKEILITLPYIASIEIAGPGFINFTIKAETWQIAIKDILQHEEKFCEIDIDKSRNINIEYVSANPTGPMHIGHARGAVYGDVLARILQKVGYFVTKEYYVNDAGSQINDLVSTVLLRYREALGETITIPDGLYPGEYLIPLGQILAEEYGNKLLMMDEEERFKIVKNFAVEKMLDLNRKDLADLGIKHDIFFSEQSLHDKCAIEETVKLLTGMGLIYEGILPPPKGKVHDEWDNRVQKLFKSTNYGDSQDRPIEKADGSWSYFASDLAYAKDKIDRGVSHLIYVLGADHSGYVKRIEAIVKALGKEQVKVDVKICQLVNFVENGVPVKMSKRLGSFASVQDVNHEVGKDIIRFMMLTRQNDKPLDFDLVKVKEQSRENPIFYVQYAHVRTISILSKARELMPESYNNFEACKYDLSLLSSEEEIAIIKLLASWTKTLETSAKYFEPHRIAFYLINLASKFHSMWNFGKEHSDYRFIIESNKELTTARLALATAIQKVIASGLEVIGVEPMDRM.

The 'HIGH' region signature appears at alanine 126–histidine 136.

This sequence belongs to the class-I aminoacyl-tRNA synthetase family. In terms of assembly, monomer.

Its subcellular location is the cytoplasm. The catalysed reaction is tRNA(Arg) + L-arginine + ATP = L-arginyl-tRNA(Arg) + AMP + diphosphate. In Rickettsia akari (strain Hartford), this protein is Arginine--tRNA ligase.